Reading from the N-terminus, the 128-residue chain is Large-conductance mechanosensitive channel (128 aa).

Transmembrane regions (helical) follow at residues 11–31 and 70–90; these read FALK…AAFG and GAFI…FIFV.

Belongs to the MscL family. As to quaternary structure, homopentamer.

Its subcellular location is the cell membrane. Its function is as follows. Channel that opens in response to stretch forces in the membrane lipid bilayer. May participate in the regulation of osmotic pressure changes within the cell. The polypeptide is Large-conductance mechanosensitive channel (Listeria monocytogenes serotype 4a (strain HCC23)).